The primary structure comprises 372 residues: Chaperone protein DnaJ (372 aa).

The 65-residue stretch at 5-69 (EFYDRLGVSK…QKRAAYDQYG (65 aa)) folds into the J domain. The CR-type zinc finger occupies 129-211 (GTEKEVKYHR…CHGTGHEKQA (83 aa)). Zn(2+) contacts are provided by cysteine 142, cysteine 145, cysteine 159, cysteine 162, cysteine 185, cysteine 188, cysteine 199, and cysteine 202. CXXCXGXG motif repeat units lie at residues 142 to 149 (CRTCNGSG), 159 to 166 (CGRCHGAG), 185 to 192 (CDVCHGRG), and 199 to 206 (CTTCHGTG).

This sequence belongs to the DnaJ family. Homodimer. Zn(2+) serves as cofactor.

It localises to the cytoplasm. Participates actively in the response to hyperosmotic and heat shock by preventing the aggregation of stress-denatured proteins and by disaggregating proteins, also in an autonomous, DnaK-independent fashion. Unfolded proteins bind initially to DnaJ; upon interaction with the DnaJ-bound protein, DnaK hydrolyzes its bound ATP, resulting in the formation of a stable complex. GrpE releases ADP from DnaK; ATP binding to DnaK triggers the release of the substrate protein, thus completing the reaction cycle. Several rounds of ATP-dependent interactions between DnaJ, DnaK and GrpE are required for fully efficient folding. Also involved, together with DnaK and GrpE, in the DNA replication of plasmids through activation of initiation proteins. The protein is Chaperone protein DnaJ of Streptococcus pneumoniae (strain ATCC BAA-255 / R6).